Consider the following 239-residue polypeptide: Phosphothreonine lyase OspF (239 aa).

Catalysis depends on His-104, which acts as the Proton donor. Lys-134 functions as the Proton acceptor in the catalytic mechanism.

The protein belongs to the phosphothreonine lyase family.

The protein localises to the secreted. With respect to regulation, inhibited by the tyrosine phosphatase inhibitor vanadate. Its function is as follows. Catalyzes the removal of the phosphate group from the phosphothreonine in the mitogen-activated protein kinases such as MAPK2/ERK2, MAPK3/ERK1, MAPK8 and MAPK14 in an irreversible reaction, thus preventing the downstream phosphorylation of histone H3. This epigenetic modification results in inhibition of the transcription of a specific subset of pro-inflammatory genes, and ultimately to a reduced immune response against the invading pathogen. The diminished immune response enhances the bacterium's ability to disseminate and multiply within the host. In Shigella flexneri, this protein is Phosphothreonine lyase OspF (ospF).